The sequence spans 295 residues: Small ribosomal subunit protein uS2 (295 aa).

Ser2 carries the post-translational modification N-acetylserine. Ser43 is subject to Phosphoserine. Lys52 bears the N6-acetyllysine mark. Residues 54 to 113 (TWEKLLLAARAIVAIENPADVSVISSRNTGQRAVLKFAAATGATPIAGRFTPGTFTNQIQ) form an interaction with PPP1R16B region. Lys89 bears the N6-acetyllysine; alternate mark. Lys89 participates in a covalent cross-link: Glycyl lysine isopeptide (Lys-Gly) (interchain with G-Cter in SUMO2); alternate. The residue at position 97 (Thr97) is a Phosphothreonine. Laminin-binding regions lie at residues 161–180 (IPCNNKGAHSVGLMWWMLAR) and 205–229 (RDPEEIEKEEQAAAEKAVTKEEFQG). 5 [DE]-W-[ST] repeats span residues 230–232 (EWT), 247–249 (DWS), 266–268 (DWS), 275–277 (DWS), and 293–295 (EWS). The segment at 242-295 (QPEVADWSEGVQVPSVPIQQFPTEDWSAQPTTEDWSAAPTAQATEWVGTTTEWS) is laminin-binding. The segment at 266–295 (DWSAQPTTEDWSAAPTAQATEWVGTTTEWS) is disordered.

It belongs to the universal ribosomal protein uS2 family. Monomer (37LRP) and homodimer (67LR). Component of the small ribosomal subunit. Mature ribosomes consist of a small (40S) and a large (60S) subunit. The 40S subunit contains about 33 different proteins and 1 molecule of RNA (18S). The 60S subunit contains about 49 different proteins and 3 molecules of RNA (28S, 5.8S and 5S). Interacts with RPS21. Interacts with several laminins including at least LAMB1. Interacts with MDK. The mature dimeric form interacts with PPP1R16B (via its fourth ankyrin repeat). Interacts with PPP1CA only in the presence of PPP1R16B. In terms of processing, acylated. Acylation may be a prerequisite for conversion of the monomeric 37 kDa laminin receptor precursor (37LRP) to the mature dimeric 67 kDa laminin receptor (67LR), and may provide a mechanism for membrane association. Cleaved by stromelysin-3 (ST3) at the cell surface. Cleavage by stromelysin-3 may be a mechanism to alter cell-extracellular matrix interactions.

Its subcellular location is the cell membrane. The protein localises to the cytoplasm. It is found in the nucleus. Required for the assembly and/or stability of the 40S ribosomal subunit. Required for the processing of the 20S rRNA-precursor to mature 18S rRNA in a late step of the maturation of 40S ribosomal subunits. Also functions as a cell surface receptor for laminin. Plays a role in cell adhesion to the basement membrane and in the consequent activation of signaling transduction pathways. May play a role in cell fate determination and tissue morphogenesis. Also acts as a receptor for several other ligands, including the pathogenic prion protein, viruses, and bacteria. Acts as a PPP1R16B-dependent substrate of PPP1CA. The sequence is that of Small ribosomal subunit protein uS2 from Sus scrofa (Pig).